The chain runs to 136 residues: Protein PsiE (136 aa).

The next 4 membrane-spanning stretches (helical) occupy residues 15-35, 55-75, 82-102, and 108-128; these read ILQT…VVFL, YELV…ALIV, FHFP…RLII, and PLDV…LWLC.

It belongs to the PsiE family.

Its subcellular location is the cell inner membrane. This chain is Protein PsiE, found in Escherichia coli (strain UTI89 / UPEC).